Reading from the N-terminus, the 122-residue chain is Large ribosomal subunit protein bL12 (122 aa).

This sequence belongs to the bacterial ribosomal protein bL12 family. Homodimer. Part of the ribosomal stalk of the 50S ribosomal subunit. Forms a multimeric L10(L12)X complex, where L10 forms an elongated spine to which 2 to 4 L12 dimers bind in a sequential fashion. Binds GTP-bound translation factors.

In terms of biological role, forms part of the ribosomal stalk which helps the ribosome interact with GTP-bound translation factors. Is thus essential for accurate translation. The protein is Large ribosomal subunit protein bL12 of Histophilus somni (strain 129Pt) (Haemophilus somnus).